We begin with the raw amino-acid sequence, 306 residues long: Elongation factor Ts (306 aa).

Residues 80–83 (TDFV) form an involved in Mg(2+) ion dislocation from EF-Tu region.

Belongs to the EF-Ts family.

Its subcellular location is the cytoplasm. Associates with the EF-Tu.GDP complex and induces the exchange of GDP to GTP. It remains bound to the aminoacyl-tRNA.EF-Tu.GTP complex up to the GTP hydrolysis stage on the ribosome. The protein is Elongation factor Ts of Methylorubrum extorquens (strain CM4 / NCIMB 13688) (Methylobacterium extorquens).